Consider the following 571-residue polypeptide: Phosphatidylinositol-3,5-bisphosphate 3-phosphatase MTMR2 (571 aa).

The 67-residue stretch at 1–67 folds into the GRAM domain; the sequence is MEEPPLLPGE…GVINRVEKIG (67 aa). The Myotubularin phosphatase domain occupies 133–508; the sequence is GWKVYDPIWE…RHLELWVGYY (376 aa). A 1,2-diacyl-sn-glycero-3-phospho-(1D-myo-inositol-3,5-bisphosphate) contacts are provided by N258, N283, and I284. Residues N258, N283, and I284 each contribute to the a 1,2-diacyl-sn-glycero-3-phospho-(1D-myo-inositol-3-phosphate) site. The active-site Phosphocysteine intermediate is C345. Positions 346, 347, 348, 349, 350, 351, 387, and 391 each coordinate a 1,2-diacyl-sn-glycero-3-phospho-(1D-myo-inositol-3,5-bisphosphate). A 1,2-diacyl-sn-glycero-3-phospho-(1D-myo-inositol-3-phosphate) contacts are provided by S346, D347, G348, W349, D350, and R351. An a 1,2-diacyl-sn-glycero-3-phospho-(1D-myo-inositol-3-phosphate)-binding site is contributed by R391. A coiled-coil region spans residues 521–553; sequence VHNRYKELLAKRAELQKKVEELQREITNRSTSS. Residues 544-571 form a disordered region; the sequence is REITNRSTSSSERAGSPAQCVTPVQTVV.

This sequence belongs to the protein-tyrosine phosphatase family. Non-receptor class myotubularin subfamily. Homooligomer and heterooligomer.

Its subcellular location is the cytoplasm. It localises to the early endosome membrane. The enzyme catalyses a 1,2-diacyl-sn-glycero-3-phospho-(1D-myo-inositol-3,5-bisphosphate) + H2O = a 1,2-diacyl-sn-glycero-3-phospho-(1D-myo-inositol-5-phosphate) + phosphate. It carries out the reaction a 1,2-diacyl-sn-glycero-3-phospho-(1D-myo-inositol-3-phosphate) + H2O = a 1,2-diacyl-sn-glycero-3-phospho-(1D-myo-inositol) + phosphate. It catalyses the reaction 1,2-dioctanoyl-sn-glycero-3-phospho-(1-D-myo-inositol-3-phosphate) + H2O = 1,2-dioctanoyl-sn-glycero-3-phospho-(1D-myo-inositol) + phosphate. The catalysed reaction is 1,2-dioctanoyl-sn-glycero-3-phospho-(1D-myo-inositol-3,5-bisphosphate) + H2O = 1,2-dioctanoyl-sn-glycero-3-phospho-(1D-myo-inositol-5-phosphate) + phosphate. Functionally, lipid phosphatase that specifically dephosphorylates the D-3 position of phosphatidylinositol 3-phosphate and phosphatidylinositol 3,5-bisphosphate, generating phosphatidylinositol and phosphatidylinositol 5-phosphate. Regulates the level of these phosphoinositides critical for various biological processes including autophagy initiation and autophagosome maturation. This Gallus gallus (Chicken) protein is Phosphatidylinositol-3,5-bisphosphate 3-phosphatase MTMR2.